A 481-amino-acid chain; its full sequence is Chromosomal replication initiator protein DnaA (481 aa).

The tract at residues 1–74 (MSQDLWSFCL…ELGAEFHGAP (74 aa)) is domain I, interacts with DnaA modulators. Residues 74–144 (PIEIELVLPA…TASDLAYEKT (71 aa)) are domain II. Residues 101–123 (AGPAPAPTPSQAPAATAAAPAVV) form a disordered region. The segment covering 111–123 (QAPAATAAAPAVV) has biased composition (low complexity). Residues 145–361 (RLNADFTFDT…GALNKVVAFA (217 aa)) form a domain III, AAA+ region region. Positions 189, 191, 192, and 193 each coordinate ATP. The segment at 362–481 (RFHGRGITLE…VHVLTQVLRG (120 aa)) is domain IV, binds dsDNA.

It belongs to the DnaA family. As to quaternary structure, oligomerizes as a right-handed, spiral filament on DNA at oriC.

It localises to the cytoplasm. Plays an essential role in the initiation and regulation of chromosomal replication. ATP-DnaA binds to the origin of replication (oriC) to initiate formation of the DNA replication initiation complex once per cell cycle. Binds the DnaA box (a 9 base pair repeat at the origin) and separates the double-stranded (ds)DNA. Forms a right-handed helical filament on oriC DNA; dsDNA binds to the exterior of the filament while single-stranded (ss)DNA is stabiized in the filament's interior. The ATP-DnaA-oriC complex binds and stabilizes one strand of the AT-rich DNA unwinding element (DUE), permitting loading of DNA polymerase. After initiation quickly degrades to an ADP-DnaA complex that is not apt for DNA replication. Binds acidic phospholipids. This is Chromosomal replication initiator protein DnaA from Aromatoleum aromaticum (strain DSM 19018 / LMG 30748 / EbN1) (Azoarcus sp. (strain EbN1)).